A 367-amino-acid polypeptide reads, in one-letter code: Peptide chain release factor 2 (367 aa).

Gln254 bears the N5-methylglutamine mark.

Belongs to the prokaryotic/mitochondrial release factor family. Methylated by PrmC. Methylation increases the termination efficiency of RF2.

It localises to the cytoplasm. Peptide chain release factor 2 directs the termination of translation in response to the peptide chain termination codons UGA and UAA. The sequence is that of Peptide chain release factor 2 from Bordetella avium (strain 197N).